Reading from the N-terminus, the 287-residue chain is Nitrogenase iron protein (287 aa).

Gly8 to Ser15 serves as a coordination point for ATP. Cys96 lines the [4Fe-4S] cluster pocket. Residue Arg99 is modified to ADP-ribosylarginine; by dinitrogenase reductase ADP-ribosyltransferase. [4Fe-4S] cluster is bound at residue Cys130.

Belongs to the NifH/BchL/ChlL family. In terms of assembly, homodimer. The cofactor is [4Fe-4S] cluster. In terms of processing, the reversible ADP-ribosylation of Arg-99 inactivates the nitrogenase reductase and regulates nitrogenase activity.

The catalysed reaction is N2 + 8 reduced [2Fe-2S]-[ferredoxin] + 16 ATP + 16 H2O = H2 + 8 oxidized [2Fe-2S]-[ferredoxin] + 2 NH4(+) + 16 ADP + 16 phosphate + 6 H(+). The key enzymatic reactions in nitrogen fixation are catalyzed by the nitrogenase complex, which has 2 components: the iron protein and the molybdenum-iron protein. This is Nitrogenase iron protein from Frankia casuarinae (strain DSM 45818 / CECT 9043 / HFP020203 / CcI3).